Consider the following 21-residue polypeptide: 71 kDa F-actin-binding protein (21 aa).

It to yeast fimbrin. In terms of processing, the N-terminus is blocked.

In terms of biological role, binds directly to F-actin and induces actin filament bundling. May function as a regulator of actin filament organization. The polypeptide is 71 kDa F-actin-binding protein (Tetrahymena pyriformis).